Consider the following 691-residue polypeptide: Elongation factor G (691 aa).

One can recognise a tr-type G domain in the interval E8–I282. Residues A17–T24, D81–H85, and N135–D138 contribute to the GTP site.

Belongs to the TRAFAC class translation factor GTPase superfamily. Classic translation factor GTPase family. EF-G/EF-2 subfamily.

It localises to the cytoplasm. Its function is as follows. Catalyzes the GTP-dependent ribosomal translocation step during translation elongation. During this step, the ribosome changes from the pre-translocational (PRE) to the post-translocational (POST) state as the newly formed A-site-bound peptidyl-tRNA and P-site-bound deacylated tRNA move to the P and E sites, respectively. Catalyzes the coordinated movement of the two tRNA molecules, the mRNA and conformational changes in the ribosome. In Synechococcus sp. (strain CC9902), this protein is Elongation factor G.